We begin with the raw amino-acid sequence, 320 residues long: tRNA (guanosine(34)-2'-O)-methyltransferase (320 aa).

Residues Gly-53, Trp-55, Asp-81, Asp-97, and Asp-122 each coordinate S-adenosyl-L-methionine. Residue Lys-162 is the Proton acceptor of the active site.

This sequence belongs to the class I-like SAM-binding methyltransferase superfamily. RNA methyltransferase RlmE family. TRM7 subfamily. In terms of assembly, interacts with CG33172/WDR6.

Its subcellular location is the cytoplasm. It carries out the reaction cytidine(32)/guanosine(34) in tRNA + 2 S-adenosyl-L-methionine = 2'-O-methylcytidine(32)/2'-O-methylguanosine(34) in tRNA + 2 S-adenosyl-L-homocysteine + 2 H(+). Its function is as follows. Methylates the 2'-O-ribose of nucleotides at position 34 of the tRNA anticodon loop of substrate tRNAs. May require WDR6 for methylation of the nucleotide at position 34 of the anticodon loop of substrate tRNAs. Plays a role in neurogenesis. Requisite for RNA-mediated gene silencing. Modifies position 34 in tRNA(Leu(CAA)), tRNA(Leu(CAG)), tRNA(Phe(GAA)), and tRNA(Trp(CCA)). The sequence is that of tRNA (guanosine(34)-2'-O)-methyltransferase from Drosophila melanogaster (Fruit fly).